Here is a 172-residue protein sequence, read N- to C-terminus: Small ribosomal subunit protein uS5 (172 aa).

The S5 DRBM domain occupies 17–80 (FTEKLIKLNR…ERAKRSMVLF (64 aa)).

The protein belongs to the universal ribosomal protein uS5 family. Part of the 30S ribosomal subunit. Contacts proteins S4 and S8.

With S4 and S12 plays an important role in translational accuracy. Its function is as follows. Located at the back of the 30S subunit body where it stabilizes the conformation of the head with respect to the body. In Treponema pallidum (strain Nichols), this protein is Small ribosomal subunit protein uS5.